We begin with the raw amino-acid sequence, 89 residues long: Myrmicitoxin(1)-Pm2a (89 aa).

An N-terminal signal peptide occupies residues 1–22 (MEIPKLLYIAVIAIGLSGSLTC). Residues 23–61 (ATPLANPWGDPEAEANPEAKATAEATAEAIAEALAEPEP) constitute a propeptide that is removed on maturation. Asn88 is modified (asparagine amide).

It belongs to the formicidae venom clade 1 family. In terms of tissue distribution, expressed by the venom gland.

The protein resides in the secreted. Functionally, toxin that potently modulates mammalian voltage-gated sodium (Nav) channels, reducing the voltage threshold for activation and inhibiting channel inactivation. Shows activity on hNav1.6/SCN8A (EC(50)=176 nM), mNav1.7/SCN9A (EC(50)=102 nM) and hNav1.7 (EC(50)=154 nM). In vivo, causes spontaneous, gradual and long-lasting nocifensive behaviors by intraplantar injection in mice, as well as pronounced swelling of the injected paw. Does not have effect on insects (blowflies). The chain is Myrmicitoxin(1)-Pm2a from Pogonomyrmex maricopa (Maricopa harvester ant).